We begin with the raw amino-acid sequence, 172 residues long: Bone marrow stromal antigen 2 (172 aa).

Residues 1-30 lie on the Cytoplasmic side of the membrane; that stretch reads MAPSFYHYLPVPMDEMGGKQGWGSHRQWLG. The chain crosses the membrane as a helical; Signal-anchor for type II membrane protein span at residues 31-51; that stretch reads AAILVVLFGVTLVILTIYFAV. The Extracellular segment spans residues 52–152; it reads TANSVACRDG…ETSSTVQVNS (101 aa). The N-linked (GlcNAc...) asparagine glycan is linked to Asn-70. Residues 74–147 are a coiled coil; the sequence is LLQRQLTRTQ…LRIQKETSST (74 aa). N-linked (GlcNAc...) asparagine; atypical glycosylation occurs at Asn-94. Asn-97 carries an N-linked (GlcNAc...) asparagine glycan. The GPI-anchor amidated serine moiety is linked to residue Ser-152. A propeptide spans 153–172 (removed in mature form); that stretch reads GSSMVVSSLLVLKVSLFLLF.

As to quaternary structure, parallel homodimer; disulfide-linked. May form homotetramers under reducing conditions. Isoform 1 and isoform 2 form homodimers and also heterodimers with each other. Dimerization is essential for its antiviral activity. Interacts (via cytoplasmic domain) with ARHGAP44. Interacts with MMP14 (via C-terminal cytoplasmic tail). Interacts with LILRA4/ILT7. Interacts with RNF115. As to expression, in naive mice, specifically expressed on type I interferon-producing cells (at protein level).

The protein localises to the golgi apparatus. It is found in the trans-Golgi network. Its subcellular location is the cell membrane. It localises to the late endosome. The protein resides in the membrane raft. The protein localises to the cytoplasm. It is found in the apical cell membrane. Its function is as follows. IFN-induced antiviral host restriction factor which efficiently blocks the release of diverse mammalian enveloped viruses by directly tethering nascent virions to the membranes of infected cells. Acts as a direct physical tether, holding virions to the cell membrane and linking virions to each other. The tethered virions can be internalized by endocytosis and subsequently degraded or they can remain on the cell surface. In either case, their spread as cell-free virions is restricted. Its target viruses belong to diverse families, including retroviridae: human immunodeficiency virus type 1 (HIV-1), mouse mammary tumor virus (MMTV) and murine leukemia virus (MLV), filoviridae: ebola virus (EBOV), arenaviridae: lassa virus (LASV), and rhabdoviridae: vesicular stomatitis virus (VSV). Can inhibit cell surface proteolytic activity of MMP14 causing decreased activation of MMP15 which results in inhibition of cell growth and migration. Can stimulate signaling by LILRA4/ILT7 and consequently provide negative feedback to the production of IFN by plasmacytoid dendritic cells in response to viral infection. Plays a role in the organization of the subapical actin cytoskeleton in polarized epithelial cells. In Mus musculus (Mouse), this protein is Bone marrow stromal antigen 2 (Bst2).